The chain runs to 210 residues: Holliday junction branch migration complex subunit RuvA (210 aa).

The domain I stretch occupies residues M1–L64. The tract at residues H65–T143 is domain II. The interval E144 to N154 is flexible linker. Residues S155–F210 form a domain III region.

This sequence belongs to the RuvA family. In terms of assembly, homotetramer. Forms an RuvA(8)-RuvB(12)-Holliday junction (HJ) complex. HJ DNA is sandwiched between 2 RuvA tetramers; dsDNA enters through RuvA and exits via RuvB. An RuvB hexamer assembles on each DNA strand where it exits the tetramer. Each RuvB hexamer is contacted by two RuvA subunits (via domain III) on 2 adjacent RuvB subunits; this complex drives branch migration. In the full resolvosome a probable DNA-RuvA(4)-RuvB(12)-RuvC(2) complex forms which resolves the HJ.

It localises to the cytoplasm. Its function is as follows. The RuvA-RuvB-RuvC complex processes Holliday junction (HJ) DNA during genetic recombination and DNA repair, while the RuvA-RuvB complex plays an important role in the rescue of blocked DNA replication forks via replication fork reversal (RFR). RuvA specifically binds to HJ cruciform DNA, conferring on it an open structure. The RuvB hexamer acts as an ATP-dependent pump, pulling dsDNA into and through the RuvAB complex. HJ branch migration allows RuvC to scan DNA until it finds its consensus sequence, where it cleaves and resolves the cruciform DNA. The protein is Holliday junction branch migration complex subunit RuvA of Psychrobacter sp. (strain PRwf-1).